Here is a 467-residue protein sequence, read N- to C-terminus: Dihydroorotase (467 aa).

Zn(2+) contacts are provided by H60 and H62. Residues 62-64 (HFR) and N94 each bind substrate. 4 residues coordinate Zn(2+): E146, H180, H234, and D313. The active site involves D313. Residue H317 coordinates substrate. A disordered region spans residues 439-467 (KPGRGEFLEGSGKRSEEDEEENSEETGSD). The span at 441–454 (GRGEFLEGSGKRSE) shows a compositional bias: basic and acidic residues. Over residues 455–467 (EDEEENSEETGSD) the composition is skewed to acidic residues.

This sequence belongs to the metallo-dependent hydrolases superfamily. DHOase family. Class I DHOase subfamily. It depends on Zn(2+) as a cofactor.

It catalyses the reaction (S)-dihydroorotate + H2O = N-carbamoyl-L-aspartate + H(+). It functions in the pathway pyrimidine metabolism; UMP biosynthesis via de novo pathway; (S)-dihydroorotate from bicarbonate: step 3/3. Catalyzes the reversible cyclization of carbamoyl aspartate to dihydroorotate. This is Dihydroorotase from Methanosarcina acetivorans (strain ATCC 35395 / DSM 2834 / JCM 12185 / C2A).